Consider the following 423-residue polypeptide: Gamma-glutamyl phosphate reductase (423 aa).

The protein belongs to the gamma-glutamyl phosphate reductase family.

The protein resides in the cytoplasm. The catalysed reaction is L-glutamate 5-semialdehyde + phosphate + NADP(+) = L-glutamyl 5-phosphate + NADPH + H(+). It functions in the pathway amino-acid biosynthesis; L-proline biosynthesis; L-glutamate 5-semialdehyde from L-glutamate: step 2/2. In terms of biological role, catalyzes the NADPH-dependent reduction of L-glutamate 5-phosphate into L-glutamate 5-semialdehyde and phosphate. The product spontaneously undergoes cyclization to form 1-pyrroline-5-carboxylate. This Paramagnetospirillum magneticum (strain ATCC 700264 / AMB-1) (Magnetospirillum magneticum) protein is Gamma-glutamyl phosphate reductase.